The primary structure comprises 511 residues: Exodeoxyribonuclease 7 large subunit (511 aa).

The protein belongs to the XseA family. In terms of assembly, heterooligomer composed of large and small subunits.

The protein resides in the cytoplasm. It catalyses the reaction Exonucleolytic cleavage in either 5'- to 3'- or 3'- to 5'-direction to yield nucleoside 5'-phosphates.. Its function is as follows. Bidirectionally degrades single-stranded DNA into large acid-insoluble oligonucleotides, which are then degraded further into small acid-soluble oligonucleotides. The protein is Exodeoxyribonuclease 7 large subunit of Brucella melitensis biotype 2 (strain ATCC 23457).